The sequence spans 436 residues: Gamma-glutamyl phosphate reductase (436 aa).

Belongs to the gamma-glutamyl phosphate reductase family.

Its subcellular location is the cytoplasm. The enzyme catalyses L-glutamate 5-semialdehyde + phosphate + NADP(+) = L-glutamyl 5-phosphate + NADPH + H(+). It functions in the pathway amino-acid biosynthesis; L-proline biosynthesis; L-glutamate 5-semialdehyde from L-glutamate: step 2/2. Catalyzes the NADPH-dependent reduction of L-glutamate 5-phosphate into L-glutamate 5-semialdehyde and phosphate. The product spontaneously undergoes cyclization to form 1-pyrroline-5-carboxylate. This chain is Gamma-glutamyl phosphate reductase, found in Polaromonas sp. (strain JS666 / ATCC BAA-500).